A 103-amino-acid chain; its full sequence is Co-chaperonin GroES (103 aa).

It belongs to the GroES chaperonin family. As to quaternary structure, heptamer of 7 subunits arranged in a ring. Interacts with the chaperonin GroEL.

The protein localises to the cytoplasm. Functionally, together with the chaperonin GroEL, plays an essential role in assisting protein folding. The GroEL-GroES system forms a nano-cage that allows encapsulation of the non-native substrate proteins and provides a physical environment optimized to promote and accelerate protein folding. GroES binds to the apical surface of the GroEL ring, thereby capping the opening of the GroEL channel. This Synechococcus sp. (strain CC9902) protein is Co-chaperonin GroES.